Consider the following 585-residue polypeptide: Glycerol-3-phosphate dehydrogenase (585 aa).

37–65 contributes to the FAD binding site; sequence DVVVIGGGVVGSGCALDAATRGLKVALVE.

This sequence belongs to the FAD-dependent glycerol-3-phosphate dehydrogenase family. Requires FAD as cofactor.

The protein localises to the cytoplasm. The enzyme catalyses a quinone + sn-glycerol 3-phosphate = dihydroxyacetone phosphate + a quinol. The polypeptide is Glycerol-3-phosphate dehydrogenase (glpD) (Mycobacterium leprae (strain TN)).